We begin with the raw amino-acid sequence, 294 residues long: NAD kinase (294 aa).

Asp74 acts as the Proton acceptor in catalysis. NAD(+) contacts are provided by residues 74–75 (DG), 148–149 (NE), His159, Arg176, Asp178, 189–194 (TAYSLS), and Gln249.

It belongs to the NAD kinase family. Requires a divalent metal cation as cofactor.

It localises to the cytoplasm. The catalysed reaction is NAD(+) + ATP = ADP + NADP(+) + H(+). Functionally, involved in the regulation of the intracellular balance of NAD and NADP, and is a key enzyme in the biosynthesis of NADP. Catalyzes specifically the phosphorylation on 2'-hydroxyl of the adenosine moiety of NAD to yield NADP. This Vibrio vulnificus (strain CMCP6) protein is NAD kinase.